Reading from the N-terminus, the 346-residue chain is 4-hydroxy-2-oxovalerate aldolase (346 aa).

The Pyruvate carboxyltransferase domain maps to valine 8–methionine 260. Arginine 16–aspartate 17 provides a ligand contact to substrate. Aspartate 17 contacts Mn(2+). The active-site Proton acceptor is the histidine 20. Substrate-binding residues include serine 170 and histidine 199. Mn(2+)-binding residues include histidine 199 and histidine 201. Substrate is bound at residue tyrosine 290.

This sequence belongs to the 4-hydroxy-2-oxovalerate aldolase family.

The enzyme catalyses (S)-4-hydroxy-2-oxopentanoate = acetaldehyde + pyruvate. It functions in the pathway aromatic compound metabolism; naphthalene degradation. This Pseudomonas putida (Arthrobacter siderocapsulatus) protein is 4-hydroxy-2-oxovalerate aldolase (nahM).